The following is a 117-amino-acid chain: uncharacterized protein (117 aa).

2 helical membrane passes run 9–29 (ITSH…FIPF) and 56–76 (VIIV…FFIP).

It is found in the membrane. This is an uncharacterized protein from Saccharomyces cerevisiae (strain ATCC 204508 / S288c) (Baker's yeast).